The sequence spans 886 residues: Valine--tRNA ligase (886 aa).

The short motif at 53 to 63 (PNVTGSLHMGH) is the 'HIGH' region element. The short motif at 540–544 (KMSKS) is the 'KMSKS' region element. Lys543 is an ATP binding site. The stretch at 819–851 (TIDVAAERRRLEKELAGAQKELASTAAKLANAD) forms a coiled coil.

Belongs to the class-I aminoacyl-tRNA synthetase family. ValS type 1 subfamily. As to quaternary structure, monomer.

Its subcellular location is the cytoplasm. The enzyme catalyses tRNA(Val) + L-valine + ATP = L-valyl-tRNA(Val) + AMP + diphosphate. Its function is as follows. Catalyzes the attachment of valine to tRNA(Val). As ValRS can inadvertently accommodate and process structurally similar amino acids such as threonine, to avoid such errors, it has a 'posttransfer' editing activity that hydrolyzes mischarged Thr-tRNA(Val) in a tRNA-dependent manner. The polypeptide is Valine--tRNA ligase (Mycobacterium tuberculosis (strain CDC 1551 / Oshkosh)).